A 93-amino-acid chain; its full sequence is uncharacterized protein (93 aa).

The protein to M.tuberculosis Rv1738.

This is an uncharacterized protein from Mycobacterium tuberculosis (strain CDC 1551 / Oshkosh).